Here is a 341-residue protein sequence, read N- to C-terminus: Retinol dehydrogenase 10-A (341 aa).

The chain crosses the membrane as a helical; Signal-anchor span at residues 3–23 (IVLEFFLVTFRVLWAFVLAAG). 40–64 (LITGAGSGLGRLFALEFARRRAQLV) lines the NADP(+) pocket. S197 is a substrate binding site. The active-site Proton acceptor is the Y210.

The protein belongs to the short-chain dehydrogenases/reductases (SDR) family.

It is found in the microsome membrane. Its subcellular location is the endoplasmic reticulum membrane. The catalysed reaction is all-trans-retinol + NADP(+) = all-trans-retinal + NADPH + H(+). It functions in the pathway cofactor metabolism; retinol metabolism. Retinol dehydrogenase with a clear preference for NADP. Converts all-trans-retinol to all-trans-retinal. Has no detectable activity towards 11-cis-retinol, 9-cis-retinol and 13-cis-retinol. In Xenopus laevis (African clawed frog), this protein is Retinol dehydrogenase 10-A (rdh10-a).